The primary structure comprises 221 residues: Eukaryotic translation initiation factor 4E-2 (221 aa).

The segment covering 1–20 has biased composition (basic and acidic residues); it reads MADELNKAALEEYKSSSVED. The disordered stretch occupies residues 1–36; the sequence is MADELNKAALEEYKSSSVEDRGEEGEIVGESDDTAS. Positions 21-33 are enriched in acidic residues; that stretch reads RGEEGEIVGESDD. EIF4G-binding regions lie at residues 46–49 and 56–92; these read HPLE and FDNPSGKSKQAAWGSSIRPIYTFSTAEDFWSVYNNIH. MRNA is bound by residues 64–69, Lys96, and 114–115; these read KQAAWG and WE. A disulfide bond links Cys119 and Cys157. The interval 140–149 is EIF4G-binding; sequence YTLLALIGEQ. Residues 164–169 and 209–213 contribute to the mRNA site; these read RVRQEK and KKLDR.

This sequence belongs to the eukaryotic initiation factor 4E family. As to quaternary structure, EIF4F is a multi-subunit complex, the composition of which varies with external and internal environmental conditions. It is composed of at least EIF4A, EIF4E and EIF4G. EIF4E is also known to interact with other partners. In higher plants two isoforms of EIF4F have been identified, named isoform EIF4F and isoform EIF(iso)4F. Isoform EIF4F has subunits p220 and p26, whereas isoform EIF(iso)4F has subunits p82 and p28. (Microbial infection) Interacts with potyvirus viral genome-linked protein (VPg) in the nucleus; mostly potato virus Y (PVY-LYE84) and tobacco etch virus (TEV-HAT) VPg, but not with PVY-LYE90 and pepper mottle virus (PepMoV) VPg; these interactions are possible in susceptible hosts but impaired in resistant plants. Post-translationally, according to the redox status, the Cys-119-Cys-157 disulfide bridge may have a role in regulating protein function by affecting its ability to bind capped mRNA.

The protein resides in the nucleus. It is found in the cytoplasm. Functionally, component of the protein complex eIF4F, which is involved in the recognition of the mRNA cap, ATP-dependent unwinding of 5'-terminal secondary structure and recruitment of mRNA to the ribosome. Recognizes and binds the 7-methylguanosine-containing mRNA cap during an early step in the initiation of protein synthesis and facilitates ribosome binding by inducing the unwinding of the mRNAs secondary structures. Key component of recessive resistance to potyviruses. In terms of biological role, (Microbial infection) Susceptibility host factor required for viral infection (e.g. potato virus Y (PVY) and tobacco etch virus (TEV)) by recruiting viral RNAs to the host ribosomal complex via an interaction with viral genome-linked protein (VPg). The sequence is that of Eukaryotic translation initiation factor 4E-2 from Solanum lycopersicum (Tomato).